The chain runs to 545 residues: CTP synthase (545 aa).

The amidoligase domain stretch occupies residues Met-1–Met-267. Residue Ser-13 coordinates CTP. UTP is bound at residue Ser-13. Residues Ser-14–Ile-19 and Asp-71 contribute to the ATP site. 2 residues coordinate Mg(2+): Asp-71 and Glu-141. Residues Asp-148–Glu-150, Lys-188–Gln-193, and Lys-224 each bind CTP. Residues Lys-188 to Gln-193 and Lys-224 each bind UTP. Residues Glu-292 to Pro-534 form the Glutamine amidotransferase type-1 domain. Gly-354 contributes to the L-glutamine binding site. The active-site Nucleophile; for glutamine hydrolysis is Cys-381. Residues Leu-382 to Gln-385, Glu-405, and Arg-462 each bind L-glutamine. Catalysis depends on residues His-507 and Glu-509.

Belongs to the CTP synthase family. As to quaternary structure, homotetramer.

It catalyses the reaction UTP + L-glutamine + ATP + H2O = CTP + L-glutamate + ADP + phosphate + 2 H(+). The enzyme catalyses L-glutamine + H2O = L-glutamate + NH4(+). It carries out the reaction UTP + NH4(+) + ATP = CTP + ADP + phosphate + 2 H(+). It functions in the pathway pyrimidine metabolism; CTP biosynthesis via de novo pathway; CTP from UDP: step 2/2. With respect to regulation, allosterically activated by GTP, when glutamine is the substrate; GTP has no effect on the reaction when ammonia is the substrate. The allosteric effector GTP functions by stabilizing the protein conformation that binds the tetrahedral intermediate(s) formed during glutamine hydrolysis. Inhibited by the product CTP, via allosteric rather than competitive inhibition. Its function is as follows. Catalyzes the ATP-dependent amination of UTP to CTP with either L-glutamine or ammonia as the source of nitrogen. Regulates intracellular CTP levels through interactions with the four ribonucleotide triphosphates. This chain is CTP synthase, found in Trichormus variabilis (strain ATCC 29413 / PCC 7937) (Anabaena variabilis).